Here is a 539-residue protein sequence, read N- to C-terminus: Propionyl-CoA carboxylase beta chain, mitochondrial (539 aa).

The transit peptide at 1-28 (MAAAVRVTAARARLRVVVRSLHAGVRSL) directs the protein to the mitochondrion. In terms of domain architecture, CoA carboxyltransferase N-terminal spans 32–290 (PVSVNERIEN…SNQDPAPIRE (259 aa)). The carboxyltransferase stretch occupies residues 32 to 533 (PVSVNERIEN…SKKVQRPWRK (502 aa)). At S71 the chain carries Phosphoserine. K99 is modified (N6-acetyllysine; alternate). N6-succinyllysine; alternate is present on K99. One can recognise a CoA carboxyltransferase C-terminal domain in the interval 294–533 (PSDRLVPELD…SKKVQRPWRK (240 aa)). The tract at residues 325–358 (DERDFFEIMPNYAKNIIVGFARMNGRTVGIVGNQ) is acyl-CoA binding. N6-acetyllysine; alternate is present on residues K474 and K489. N6-succinyllysine; alternate is present on residues K474 and K489.

Belongs to the AccD/PCCB family. As to quaternary structure, the holoenzyme is a dodecamer composed of 6 PCCA/alpha subunits and 6 PCCB/beta subunits.

The protein localises to the mitochondrion matrix. It catalyses the reaction propanoyl-CoA + hydrogencarbonate + ATP = (S)-methylmalonyl-CoA + ADP + phosphate + H(+). The enzyme catalyses butanoyl-CoA + hydrogencarbonate + ATP = (2S)-ethylmalonyl-CoA + ADP + phosphate + H(+). It participates in metabolic intermediate metabolism; propanoyl-CoA degradation; succinyl-CoA from propanoyl-CoA: step 1/3. This is one of the 2 subunits of the biotin-dependent propionyl-CoA carboxylase (PCC), a mitochondrial enzyme involved in the catabolism of odd chain fatty acids, branched-chain amino acids isoleucine, threonine, methionine, and valine and other metabolites. Propionyl-CoA carboxylase catalyzes the carboxylation of propionyl-CoA/propanoyl-CoA to D-methylmalonyl-CoA/(S)-methylmalonyl-CoA. Within the holoenzyme, the alpha subunit catalyzes the ATP-dependent carboxylation of the biotin carried by the biotin carboxyl carrier (BCC) domain, while the beta subunit then transfers the carboxyl group from carboxylated biotin to propionyl-CoA. Propionyl-CoA carboxylase also significantly acts on butyryl-CoA/butanoyl-CoA, which is converted to ethylmalonyl-CoA/(2S)-ethylmalonyl-CoA at a much lower rate. Other alternative minor substrates include (2E)-butenoyl-CoA/crotonoyl-CoA. The chain is Propionyl-CoA carboxylase beta chain, mitochondrial from Sus scrofa (Pig).